Here is a 328-residue protein sequence, read N- to C-terminus: NAD(P)H-dependent pentose reductase (328 aa).

The active-site Proton donor is tyrosine 50. Histidine 112 serves as a coordination point for substrate. NAD(+) is bound by residues 174–175 (AN), 223–232 (SSFGPQSFVE), and 279–289 (KSNNVDRLKQN).

The protein belongs to the aldo/keto reductase family.

Its function is as follows. Pentose reductase with a broad substrate affinity involved in pentose catabolism. Has highest reductase activities with L-arabinose and D-xylose as substrates, and displays much lower activities with D-ribose, D-galactose and D-glucose. Has highest dehydrogenase activity with L-arabitol as substrate, followed by xylitol and D-sorbitol. May be responsible for the first step of the L-arabinose catabolic pathway. The chain is NAD(P)H-dependent pentose reductase (PRD1) from Pyricularia oryzae (strain 70-15 / ATCC MYA-4617 / FGSC 8958) (Rice blast fungus).